Reading from the N-terminus, the 310-residue chain is Bis(hydroxyethyl) terephthalate hydrolase (310 aa).

Positions 1-48 (MQQNPHTHAAPGAARPVLRGVRRRLAAVTAAVAAVLVLGTLTGPGAQA) form a signal peptide, tat-type signal. A bis(2-hydroxyethyl) terephthalate-binding site is contributed by Phe-111. Ser-179 functions as the Nucleophile in the catalytic mechanism. The bis(2-hydroxyethyl) terephthalate site is built by Met-180 and Trp-204. Catalysis depends on charge relay system residues Asp-225 and His-257. Cysteines 290 and 306 form a disulfide.

Belongs to the AB hydrolase superfamily. Predicted to be exported by the Tat system. The position of the signal peptide cleavage has not been experimentally proven.

It localises to the secreted. It catalyses the reaction bis(2-hydroxyethyl) terephthalate + H2O = 4-[(2-hydroxyethoxy)carbonyl]benzoate + ethylene glycol + H(+). Functionally, catalyzes the degradation of bis(hydroxyethyl) terephthalate (BHET), a derived-oligomer of the plastic poly(ethylene terephthalate) (PET), hydrolyzing BHET to mono(2-hydroxyethyl) terephthalate (MHET). Shows no activity against PET. The sequence is that of Bis(hydroxyethyl) terephthalate hydrolase from Streptomyces coelicolor (strain ATCC BAA-471 / A3(2) / M145).